The primary structure comprises 547 residues: Collagen EMF1-alpha (547 aa).

Disordered regions lie at residues 1 to 99 and 116 to 311; these read GVPG…APGV and GPDG…GGGI. Residues 1-280 form a triple-helical region region; it reads GVPGPNGDVG…QGPRGGQGPK (280 aa). 2 stretches are compositionally biased toward low complexity: residues 27–69 and 160–175; these read QGPD…IRGQ and QGSK…VGPQ. At lysine 187 the chain carries Allysine. Positions 219 to 228 are enriched in basic and acidic residues; the sequence is VKGEKGEVGD. Residues 246–271 are compositionally biased toward low complexity; the sequence is DAGPAGPIGDAGIQGPPGQDGPTGAQ. A compositionally biased stretch (gly residues) spans 272–281; it reads GPRGGQGPKG. Positions 308 to 336 are telopeptide; sequence GGGIILVPVNDQNPTRSPVSGSVFYRGQA. Positions 337-547 are cleaved as a propeptide — C-terminal propeptide; it reads EETDVNLGSV…GFEMGPACFY (211 aa). The Fibrillar collagen NC1 domain occupies 343 to 547; that stretch reads LGSVADVIEL…GFEMGPACFY (205 aa). Asparagine 381 and asparagine 406 each carry an N-linked (GlcNAc...) asparagine glycan.

Belongs to the fibrillar collagen family.

The protein resides in the secreted. It is found in the extracellular space. The protein localises to the extracellular matrix. The sequence is that of Collagen EMF1-alpha (COLF1) from Ephydatia muelleri (Mueller's freshwater sponge).